We begin with the raw amino-acid sequence, 428 residues long: tRNA(Ile2) 2-agmatinylcytidine synthetase TiaS (428 aa).

This sequence belongs to the TiaS family.

It localises to the cytoplasm. The catalysed reaction is cytidine(34) in tRNA(Ile2) + agmatine + ATP + H2O = 2-agmatinylcytidine(34) in tRNA(Ile2) + AMP + 2 phosphate + 2 H(+). Functionally, ATP-dependent agmatine transferase that catalyzes the formation of 2-agmatinylcytidine (agm2C) at the wobble position (C34) of tRNA(Ile2), converting the codon specificity from AUG to AUA. The polypeptide is tRNA(Ile2) 2-agmatinylcytidine synthetase TiaS (Methanosarcina acetivorans (strain ATCC 35395 / DSM 2834 / JCM 12185 / C2A)).